The sequence spans 180 residues: MKLVLVSTRGVRSLNSTNFPAPWPFVKKGAFGQRKIGPMNYEKFKWPGQNREFPELSPKFQKLNPKELHRYTGVQADGFHDEKTGEFVPVKEMRSELVVPNLDGFKLRPYVSYRTDVQIEKRRVAYEKKVLEKGSERLADLHTVEDERWPPPKMSAETLFELAYGDTVRSAYKEGKYGNK.

The N-terminal 21 residues, 1–21, are a transit peptide targeting the mitochondrion; that stretch reads MKLVLVSTRGVRSLNSTNFPA.

The protein belongs to the mitochondrion-specific ribosomal protein mL41 family. Component of the mitochondrial ribosome large subunit (39S) which comprises a 16S rRNA and about 50 distinct proteins.

The protein localises to the mitochondrion. This Caenorhabditis elegans protein is Large ribosomal subunit protein mL41 (mrpl-41).